We begin with the raw amino-acid sequence, 183 residues long: Dual-action ribosomal maturation protein DarP (183 aa).

Belongs to the DarP family.

Its subcellular location is the cytoplasm. Functionally, member of a network of 50S ribosomal subunit biogenesis factors which assembles along the 30S-50S interface, preventing incorrect 23S rRNA structures from forming. Promotes peptidyl transferase center (PTC) maturation. This is Dual-action ribosomal maturation protein DarP from Shigella flexneri serotype 5b (strain 8401).